The chain runs to 199 residues: Photosystem I reaction center subunit XI (199 aa).

2 helical membrane-spanning segments follow: residues 108-128 and 165-185; these read VTAG…LLVL and FWLG…TLHL.

Belongs to the PsaL family.

It is found in the cellular thylakoid membrane. In Prochlorococcus marinus (strain MIT 9215), this protein is Photosystem I reaction center subunit XI.